A 157-amino-acid chain; its full sequence is UPF0212 protein rrnAC1165 (157 aa).

The tract at residues 105–157 (VLEIEEIPEESDETTEDESSSAESEADADDPPSDQSADESDDVLPEFEELIDE) is disordered. Over residues 106 to 157 (LEIEEIPEESDETTEDESSSAESEADADDPPSDQSADESDDVLPEFEELIDE) the composition is skewed to acidic residues.

The protein belongs to the UPF0212 family.

The polypeptide is UPF0212 protein rrnAC1165 (Haloarcula marismortui (strain ATCC 43049 / DSM 3752 / JCM 8966 / VKM B-1809) (Halobacterium marismortui)).